The sequence spans 182 residues: Adenine phosphoribosyltransferase (182 aa).

It belongs to the purine/pyrimidine phosphoribosyltransferase family. Homodimer.

The protein resides in the cytoplasm. The catalysed reaction is AMP + diphosphate = 5-phospho-alpha-D-ribose 1-diphosphate + adenine. The protein operates within purine metabolism; AMP biosynthesis via salvage pathway; AMP from adenine: step 1/1. In terms of biological role, catalyzes a salvage reaction resulting in the formation of AMP, that is energically less costly than de novo synthesis. This chain is Adenine phosphoribosyltransferase, found in Stutzerimonas stutzeri (strain A1501) (Pseudomonas stutzeri).